The sequence spans 159 residues: Endoribonuclease YbeY (159 aa).

Zn(2+) is bound by residues H117, H121, and H127.

The protein belongs to the endoribonuclease YbeY family. Zn(2+) serves as cofactor.

It is found in the cytoplasm. Single strand-specific metallo-endoribonuclease involved in late-stage 70S ribosome quality control and in maturation of the 3' terminus of the 16S rRNA. In Azorhizobium caulinodans (strain ATCC 43989 / DSM 5975 / JCM 20966 / LMG 6465 / NBRC 14845 / NCIMB 13405 / ORS 571), this protein is Endoribonuclease YbeY.